The chain runs to 466 residues: Ribulose bisphosphate carboxylase large chain (466 aa).

K5 carries the N6,N6,N6-trimethyllysine modification. N114 and T164 together coordinate substrate. K166 acts as the Proton acceptor in catalysis. A substrate-binding site is contributed by K168. Residues K192, D194, and E195 each contribute to the Mg(2+) site. K192 carries the N6-carboxylysine modification. The active-site Proton acceptor is H285. Residues R286, H318, and S370 each coordinate substrate.

Belongs to the RuBisCO large chain family. Type I subfamily. Heterohexadecamer of 8 large chains and 8 small chains; disulfide-linked. The disulfide link is formed within the large subunit homodimers. Mg(2+) is required as a cofactor. In terms of processing, the disulfide bond which can form in the large chain dimeric partners within the hexadecamer appears to be associated with oxidative stress and protein turnover.

The protein resides in the plastid. The protein localises to the chloroplast. It catalyses the reaction 2 (2R)-3-phosphoglycerate + 2 H(+) = D-ribulose 1,5-bisphosphate + CO2 + H2O. The enzyme catalyses D-ribulose 1,5-bisphosphate + O2 = 2-phosphoglycolate + (2R)-3-phosphoglycerate + 2 H(+). Functionally, ruBisCO catalyzes two reactions: the carboxylation of D-ribulose 1,5-bisphosphate, the primary event in carbon dioxide fixation, as well as the oxidative fragmentation of the pentose substrate in the photorespiration process. Both reactions occur simultaneously and in competition at the same active site. This Averrhoa carambola (Star fruit) protein is Ribulose bisphosphate carboxylase large chain.